Here is a 201-residue protein sequence, read N- to C-terminus: Ras-related protein Rab-35 (201 aa).

Residues G18, V19, G20, K21, S22, S23, S34, G35, Y37, T39, and T40 each coordinate GTP. S22 lines the Mg(2+) pocket. Residues D30–G42 carry the Switch 1 motif. The Mg(2+) site is built by T40 and D63. Residues T64–G80 carry the Switch 2 motif. Residue G66 coordinates GTP. T72 carries the phosphothreonine; by LRRK2 modification. The residue at position 75 (S75) is an O-(2-cholinephosphoryl)serine. Y77 bears the O-AMP-tyrosine mark. Residues N120, K121, D123, A151, and K152 each contribute to the GTP site. Residues C200 and C201 are each lipidated (S-geranylgeranyl cysteine).

The protein belongs to the small GTPase superfamily. Rab family. As to quaternary structure, interacts with DENND1A and DENND1B; in a nucleotide-dependent manner. Interacts with DENND1C; weak interaction which is nucleotide-independent. Interacts (GTP-bound form) with ACAP2, RUSC2, OCRL MICAL1 and MICALL1; the interaction is direct and probably recruits these effectors to membranes. Interacts with EHD1; the interaction is indirect through MICALL1 and probably recruits EHD1 to membranes. Interacts with GDI1, GDI2, CHM and CHML; phosphorylation at Thr-72 by LRRK2 disrupts these interactions. Mg(2+) is required as a cofactor. In terms of processing, phosphorylation at Thr-72 by LRRK2 prevents the association of regulatory proteins including CHM, CHML and GDP dissociation inhibitors GDI1 and GDI2. Post-translationally, AMPylation at Tyr-77 by L.pneumophila DrrA occurs in the switch 2 region and leads to moderate inactivation of the GTPase activity. It appears to prolong the lifetime of the GTP state of RAB1B by restricting access of GTPase effectors to switch 2 and blocking effector-stimulated GTP hydrolysis, thereby rendering RAB35 constitutively active. Phosphocholinated by L.pneumophila AnkX. Both GDP-bound and GTP-bound forms can be phosphocholinated. Phosphocholination inhibits the GEF activity of DENND1A.

It is found in the cell membrane. Its subcellular location is the membrane. The protein localises to the clathrin-coated pit. The protein resides in the cytoplasmic vesicle. It localises to the clathrin-coated vesicle. It is found in the endosome. Its subcellular location is the melanosome. It carries out the reaction GTP + H2O = GDP + phosphate + H(+). Its activity is regulated as follows. Regulated by guanine nucleotide exchange factors (GEFs) including DENND1A, DENND1B and DENND1C which promote the exchange of bound GDP for free GTP. Regulated by GTPase activating proteins (GAPs) including TBC1D10 and TBC1D13 which increase GTP hydrolysis activity. Inhibited by GDP dissociation inhibitors (GDIs) which prevent Rab-GDP dissociation. The small GTPases Rab are key regulators of intracellular membrane trafficking, from the formation of transport vesicles to their fusion with membranes. Rabs cycle between an inactive GDP-bound form and an active GTP-bound form that is able to recruit to membranes different sets of downstream effectors directly responsible for vesicle formation, movement, tethering and fusion. RAB35 is involved in the process of endocytosis and is an essential rate-limiting regulator of the fast recycling pathway back to the plasma membrane. During cytokinesis, required for the postfurrowing terminal steps, namely for intercellular bridge stability and abscission, possibly by controlling phosphatidylinositol 4,5-bis phosphate (PIP2) and SEPT2 localization at the intercellular bridge. May indirectly regulate neurite outgrowth. Together with TBC1D13 may be involved in regulation of insulin-induced glucose transporter SLC2A4/GLUT4 translocation to the plasma membrane in adipocytes. This is Ras-related protein Rab-35 from Homo sapiens (Human).